The following is a 594-amino-acid chain: Choline dehydrogenase, mitochondrial (594 aa).

A mitochondrion-targeting transit peptide spans 1-29 (MWCLLRGLGRPGALARGALGQQQSLGARA). Residue 42–71 (SYVVVGAGSAGCVLAGRLTEDPAERVLLLE) coordinates FAD. Lysine 436 is subject to N6-succinyllysine. Residues lysine 484 and lysine 496 each carry the N6-acetyllysine; alternate modification. N6-succinyllysine; alternate occurs at positions 484 and 496. Histidine 511 acts as the Proton acceptor in catalysis. Lysine 580 carries the N6-acetyllysine modification.

This sequence belongs to the GMC oxidoreductase family. It depends on FAD as a cofactor.

The protein localises to the mitochondrion inner membrane. The enzyme catalyses choline + A = betaine aldehyde + AH2. It participates in amine and polyamine biosynthesis; betaine biosynthesis via choline pathway; betaine aldehyde from choline (cytochrome c reductase route): step 1/1. This Homo sapiens (Human) protein is Choline dehydrogenase, mitochondrial (CHDH).